The primary structure comprises 304 residues: Recombination-associated protein RdgC (304 aa).

Belongs to the RdgC family.

Its subcellular location is the cytoplasm. It is found in the nucleoid. In terms of biological role, may be involved in recombination. In Shewanella oneidensis (strain ATCC 700550 / JCM 31522 / CIP 106686 / LMG 19005 / NCIMB 14063 / MR-1), this protein is Recombination-associated protein RdgC.